Reading from the N-terminus, the 144-residue chain is Large ribosomal subunit protein uL15 (144 aa).

The tract at residues 1-48 (MIKLESLQDPSPRKRRTKLLGRGPSSGHGKTSCRGHKGDGSRSGYKRR) is disordered.

Belongs to the universal ribosomal protein uL15 family. Part of the 50S ribosomal subunit.

Functionally, binds to the 23S rRNA. The chain is Large ribosomal subunit protein uL15 from Chlamydia abortus (strain DSM 27085 / S26/3) (Chlamydophila abortus).